The primary structure comprises 451 residues: Phosphoglucosamine mutase (451 aa).

Residue Ser-102 is the Phosphoserine intermediate of the active site. Mg(2+)-binding residues include Ser-102, Asp-242, Asp-244, and Asp-246. Ser-102 carries the phosphoserine modification.

Belongs to the phosphohexose mutase family. The cofactor is Mg(2+). Activated by phosphorylation.

The catalysed reaction is alpha-D-glucosamine 1-phosphate = D-glucosamine 6-phosphate. In terms of biological role, catalyzes the conversion of glucosamine-6-phosphate to glucosamine-1-phosphate. The polypeptide is Phosphoglucosamine mutase (Staphylococcus saprophyticus subsp. saprophyticus (strain ATCC 15305 / DSM 20229 / NCIMB 8711 / NCTC 7292 / S-41)).